We begin with the raw amino-acid sequence, 502 residues long: Galactose/methyl galactoside import ATP-binding protein MglA (502 aa).

ABC transporter domains lie at 10–245 (LEMT…VGRE) and 255–502 (NTPK…SRYL). Position 42 to 49 (42 to 49 (GENGAGKS)) interacts with ATP.

The protein belongs to the ABC transporter superfamily. Galactose/methyl galactoside importer (TC 3.A.1.2.3) family. The complex is composed of one ATP-binding protein (MglA), two transmembrane proteins (MglC) and a solute-binding protein (MglB).

It is found in the cell inner membrane. It catalyses the reaction D-galactose(out) + ATP + H2O = D-galactose(in) + ADP + phosphate + H(+). The catalysed reaction is methyl beta-D-galactoside(out) + ATP + H2O = methyl beta-D-galactoside(in) + ADP + phosphate + H(+). Its function is as follows. Part of the ABC transporter complex MglABC involved in galactose/methyl galactoside import. Responsible for energy coupling to the transport system. In Vibrio vulnificus (strain CMCP6), this protein is Galactose/methyl galactoside import ATP-binding protein MglA.